The following is a 207-amino-acid chain: Cytidylate kinase (207 aa).

7–15 (GVAASGKSS) is an ATP binding site.

Belongs to the cytidylate kinase family. Type 1 subfamily.

The protein localises to the cytoplasm. The enzyme catalyses CMP + ATP = CDP + ADP. The catalysed reaction is dCMP + ATP = dCDP + ADP. In Deinococcus deserti (strain DSM 17065 / CIP 109153 / LMG 22923 / VCD115), this protein is Cytidylate kinase.